Here is a 160-residue protein sequence, read N- to C-terminus: Transcriptional repressor NrdR (160 aa).

The segment at 3 to 34 (CPFCRHADTQVVDSRVSEDGATIRRRRRCPAC) is a zinc-finger region. Residues 49 to 139 (PSVVKKDGSR…VYRRFEDVSE (91 aa)) form the ATP-cone domain.

Belongs to the NrdR family. The cofactor is Zn(2+).

Negatively regulates transcription of bacterial ribonucleotide reductase nrd genes and operons by binding to NrdR-boxes. The protein is Transcriptional repressor NrdR of Paraburkholderia phytofirmans (strain DSM 17436 / LMG 22146 / PsJN) (Burkholderia phytofirmans).